Reading from the N-terminus, the 291-residue chain is tRNA U34 carboxymethyltransferase (291 aa).

Carboxy-S-adenosyl-L-methionine is bound by residues K61, W75, K80, G100, 122–124, 149–150, Y169, and R284; these read DPS and VE.

It belongs to the class I-like SAM-binding methyltransferase superfamily. CmoB family. As to quaternary structure, homotetramer.

It catalyses the reaction carboxy-S-adenosyl-L-methionine + 5-hydroxyuridine(34) in tRNA = 5-carboxymethoxyuridine(34) in tRNA + S-adenosyl-L-homocysteine + H(+). In terms of biological role, catalyzes carboxymethyl transfer from carboxy-S-adenosyl-L-methionine (Cx-SAM) to 5-hydroxyuridine (ho5U) to form 5-carboxymethoxyuridine (cmo5U) at position 34 in tRNAs. This chain is tRNA U34 carboxymethyltransferase, found in Campylobacter jejuni subsp. jejuni serotype O:2 (strain ATCC 700819 / NCTC 11168).